We begin with the raw amino-acid sequence, 229 residues long: Cytochrome b6-f complex iron-sulfur subunit, chloroplastic (229 aa).

The transit peptide at Met-1–Gln-50 directs the protein to the chloroplast. Residues Leu-68–Phe-90 form a helical membrane-spanning segment. Residues Ala-115 to Leu-211 form the Rieske domain. [2Fe-2S] cluster-binding residues include Cys-157, His-159, Cys-175, and His-178. The cysteines at positions 162 and 177 are disulfide-linked. The residue at position 196 (Ser-196) is a Phosphoserine.

This sequence belongs to the Rieske iron-sulfur protein family. The 4 large subunits of the cytochrome b6-f complex are cytochrome b6, subunit IV (17 kDa polypeptide, petD), cytochrome f and the Rieske protein, while the 4 small subunits are petG, petL, petM and petN. The complex functions as a dimer. Interacts with PGRL1A. Component of a mitochondrial large protein complex that contains, at least, MIC60, DGS1, TOM40, TOM20 proteins, and petC/RISP. [2Fe-2S] cluster is required as a cofactor. Confined to photosynthetic tissues, with highest levels in flowers. In leaves, mostly localized in mesophyll cells. In stems, confined to the peripheral ring of chlorenchyma and adjoining groups of cells associated with the vascular bundles. In siliques, present in green wall of the fruit and in peduncle but not in the translucide white septum of the seeds.

The protein localises to the plastid. The protein resides in the chloroplast thylakoid membrane. It localises to the mitochondrion inner membrane. The enzyme catalyses 2 oxidized [plastocyanin] + a plastoquinol + 2 H(+)(in) = 2 reduced [plastocyanin] + a plastoquinone + 4 H(+)(out). Its function is as follows. Essential protein for photoautotrophism. Confers resistance to photo-oxidative damages by contributing to the thermal dissipation of light energy and to lumenal acidification (increase of pH gradient). Component of the cytochrome b6-f complex, which mediates electron transfer between photosystem II (PSII) and photosystem I (PSI), cyclic electron flow around PSI, and state transitions. This Arabidopsis thaliana (Mouse-ear cress) protein is Cytochrome b6-f complex iron-sulfur subunit, chloroplastic.